Consider the following 304-residue polypeptide: Type II methyltransferase M.HindV (304 aa).

Positions 1–299 constitute an SAM-dependent MTase C5-type domain; sequence MKCVDLFSGC…SAIINFEKEP (299 aa). C75 is an active-site residue.

Belongs to the class I-like SAM-binding methyltransferase superfamily. C5-methyltransferase family.

It carries out the reaction a 2'-deoxycytidine in DNA + S-adenosyl-L-methionine = a 5-methyl-2'-deoxycytidine in DNA + S-adenosyl-L-homocysteine + H(+). Functionally, a methylase, recognizes the double-stranded sequence 5'-GRCGYC-3', methylates C-? on both strands, and protects the DNA from cleavage by the HindV endonuclease. In Haemophilus influenzae (strain ATCC 51907 / DSM 11121 / KW20 / Rd), this protein is Type II methyltransferase M.HindV (hindVM).